Here is a 242-residue protein sequence, read N- to C-terminus: UPF0309 protein BOV_A0853 (242 aa).

The 180-residue stretch at 30-209 (AADLIAAAAR…FADVAARLVG (180 aa)) folds into the SIS domain.

The protein belongs to the UPF0309 family.

The sequence is that of UPF0309 protein BOV_A0853 from Brucella ovis (strain ATCC 25840 / 63/290 / NCTC 10512).